The following is a 311-amino-acid chain: GPN-loop GTPase 2 (311 aa).

G20–T25 lines the GTP pocket. A Gly-Pro-Asn (GPN)-loop; involved in dimer interface motif is present at residues G77–N79. S179–D182 contributes to the GTP binding site.

This sequence belongs to the GPN-loop GTPase family. Heterodimers with gpn1 or gpn3. Binds to RNA polymerase II (RNAPII).

Its function is as follows. Small GTPase required for proper localization of RNA polymerase II and III (RNAPII and RNAPIII). May act at an RNAP assembly step prior to nuclear import. In Danio rerio (Zebrafish), this protein is GPN-loop GTPase 2.